The chain runs to 167 residues: Phosphopantetheine adenylyltransferase (167 aa).

Thr13 is a substrate binding site. ATP contacts are provided by residues Thr13 to Phe14 and His21. The substrate site is built by Lys45, Leu78, and Arg92. Residues Gly93–Arg95, Glu103, and Thr128–Ser134 contribute to the ATP site.

The protein belongs to the bacterial CoaD family. In terms of assembly, homohexamer. Mg(2+) is required as a cofactor.

Its subcellular location is the cytoplasm. The catalysed reaction is (R)-4'-phosphopantetheine + ATP + H(+) = 3'-dephospho-CoA + diphosphate. It participates in cofactor biosynthesis; coenzyme A biosynthesis; CoA from (R)-pantothenate: step 4/5. Reversibly transfers an adenylyl group from ATP to 4'-phosphopantetheine, yielding dephospho-CoA (dPCoA) and pyrophosphate. The protein is Phosphopantetheine adenylyltransferase of Wolbachia sp. subsp. Brugia malayi (strain TRS).